The following is a 387-amino-acid chain: MKFVDEAIIRVEAGNGGSGCVSFRREKYVPDGGPDGGDGGDGGSVYLQADENLNTLITFQFERFHIAERGKNGRGRDCTGHGGEDLILKVPVGTRAIDNDTEESLGDLTTHGQKLLVAKGGFHGLGNTRFKSSTNRAPRQKTLGTDGEVRSLKLELLLLADVGLLGMPNAGKSTFIRSVSKAKPKVADYPFTTLVPNLGVVNPRPGQSFVIADIPGLIEGAADGAGLGVQFLKHLERCRVLLHILDVEPIDGSDPVESARAIVGELEKHSPKLAGKPRWLVINKADLMLEEELQERIDHIVKELEWDGDVYTISAYNREGTAELAVKLLDFIASLPPEEEVDADAEVEFKWDNYHQSANESVNEDFDDDFDDDFDEDDYDVEIIYQR.

In terms of domain architecture, Obg spans 1 to 159 (MKFVDEAIIR…RSLKLELLLL (159 aa)). One can recognise an OBG-type G domain in the interval 160 to 333 (ADVGLLGMPN…LAVKLLDFIA (174 aa)). GTP contacts are provided by residues 166-173 (GMPNAGKS), 191-195 (FTTLV), 213-216 (DIPG), 283-286 (NKAD), and 314-316 (SAY). Mg(2+) is bound by residues Ser-173 and Thr-193.

The protein belongs to the TRAFAC class OBG-HflX-like GTPase superfamily. OBG GTPase family. In terms of assembly, monomer. Mg(2+) is required as a cofactor.

The protein resides in the cytoplasm. In terms of biological role, an essential GTPase which binds GTP, GDP and possibly (p)ppGpp with moderate affinity, with high nucleotide exchange rates and a fairly low GTP hydrolysis rate. Plays a role in control of the cell cycle, stress response, ribosome biogenesis and in those bacteria that undergo differentiation, in morphogenesis control. The protein is GTPase Obg of Shewanella halifaxensis (strain HAW-EB4).